We begin with the raw amino-acid sequence, 148 residues long: Ribosome maturation factor RimP (148 aa).

It belongs to the RimP family.

The protein resides in the cytoplasm. In terms of biological role, required for maturation of 30S ribosomal subunits. The protein is Ribosome maturation factor RimP of Treponema denticola (strain ATCC 35405 / DSM 14222 / CIP 103919 / JCM 8153 / KCTC 15104).